Reading from the N-terminus, the 145-residue chain is Ribonuclease H (145 aa).

The RNase H type-1 domain maps to 1–142; that stretch reads MKEVVIYTDG…CDEIARSMIK (142 aa). Mg(2+)-binding residues include Asp-9, Glu-47, Asp-69, and Asp-134.

Belongs to the RNase H family. In terms of assembly, monomer. Mg(2+) serves as cofactor.

Its subcellular location is the cytoplasm. The enzyme catalyses Endonucleolytic cleavage to 5'-phosphomonoester.. Functionally, endonuclease that specifically degrades the RNA of RNA-DNA hybrids. The polypeptide is Ribonuclease H (Caldicellulosiruptor saccharolyticus (strain ATCC 43494 / DSM 8903 / Tp8T 6331)).